The following is a 220-amino-acid chain: Adenylate kinase (220 aa).

10–15 (GAGKGT) lines the ATP pocket. The interval 30–59 (STGDMLRAAVKAGTPLGLKAKEVMDGGNLV) is NMP. AMP is bound by residues T31, R36, 57-59 (NLV), 85-88 (GFPR), and Q92. An LID region spans residues 122–159 (GRRVHPASGRTYHIRFNPPQTAGMDDETGEPLVQRADD). ATP-binding positions include R123 and 132–133 (TY). Residues R156 and R167 each coordinate AMP. G205 lines the ATP pocket.

It belongs to the adenylate kinase family. As to quaternary structure, monomer.

It localises to the cytoplasm. It carries out the reaction AMP + ATP = 2 ADP. It functions in the pathway purine metabolism; AMP biosynthesis via salvage pathway; AMP from ADP: step 1/1. Catalyzes the reversible transfer of the terminal phosphate group between ATP and AMP. Plays an important role in cellular energy homeostasis and in adenine nucleotide metabolism. The sequence is that of Adenylate kinase from Chlorobium luteolum (strain DSM 273 / BCRC 81028 / 2530) (Pelodictyon luteolum).